The following is a 310-amino-acid chain: Protease HtpX homolog (310 aa).

2 helical membrane passes run 7–27 (SVMLLTAMTAFLLIVGQLIGG) and 29–49 (AGMTFALIMAVGMNFFSYWYS). A Zn(2+)-binding site is contributed by His131. Glu132 is an active-site residue. His135 provides a ligand contact to Zn(2+). 2 consecutive transmembrane segments (helical) span residues 141–161 (ILIGTIAATMAGAVMFLASMA) and 178–198 (PLGFAGMLIMAILAPIGAALI). Glu207 contacts Zn(2+). The tract at residues 277–310 (LTGARPQSGGAPSGPERTARNAEDSAKDFWDSLK) is disordered. Residues 293 to 310 (RTARNAEDSAKDFWDSLK) are compositionally biased toward basic and acidic residues.

The protein belongs to the peptidase M48B family. Zn(2+) is required as a cofactor.

The protein resides in the cell inner membrane. The polypeptide is Protease HtpX homolog (Desulfatibacillum aliphaticivorans).